Here is a 329-residue protein sequence, read N- to C-terminus: Signal recognition particle receptor FtsY (329 aa).

Residues 127–134, 209–213, and 273–276 each bind GTP; these read GVNGVGKT, DTAGR, and TKLD.

This sequence belongs to the GTP-binding SRP family. FtsY subfamily. Part of the signal recognition particle protein translocation system, which is composed of SRP and FtsY.

The protein localises to the cell membrane. Its subcellular location is the cytoplasm. It carries out the reaction GTP + H2O = GDP + phosphate + H(+). Its function is as follows. Involved in targeting and insertion of nascent membrane proteins into the cytoplasmic membrane. Acts as a receptor for the complex formed by the signal recognition particle (SRP) and the ribosome-nascent chain (RNC). The polypeptide is Signal recognition particle receptor FtsY (Bacillus subtilis (strain 168)).